The chain runs to 87 residues: uncharacterized protein (87 aa).

The chain crosses the membrane as a helical span at residues 21 to 41 (LSSSLYSVAFFLFFFPNFLFF).

It localises to the membrane. This is an uncharacterized protein from Saccharomyces cerevisiae (strain ATCC 204508 / S288c) (Baker's yeast).